Consider the following 138-residue polypeptide: ATP synthase epsilon chain (138 aa).

It belongs to the ATPase epsilon chain family. In terms of assembly, F-type ATPases have 2 components, CF(1) - the catalytic core - and CF(0) - the membrane proton channel. CF(1) has five subunits: alpha(3), beta(3), gamma(1), delta(1), epsilon(1). CF(0) has three main subunits: a, b and c.

It localises to the cell inner membrane. Its function is as follows. Produces ATP from ADP in the presence of a proton gradient across the membrane. The chain is ATP synthase epsilon chain from Wigglesworthia glossinidia brevipalpis.